We begin with the raw amino-acid sequence, 529 residues long: Nucleolar protein 58 (529 aa).

Phosphothreonine is present on Thr-34. At Ser-109 the chain carries Phosphoserine. Residues 155–400 (ADKVDTMIVQ…LEARLRTLED (246 aa)) form a sufficient for interaction with NOPCHAP1 region. A Glycyl lysine isopeptide (Lys-Gly) (interchain with G-Cter in SUMO2) cross-link involves residue Lys-157. The 119-residue stretch at 282–400 (IAPNVTVMVG…LEARLRTLED (119 aa)) folds into the Nop domain. Phosphoserine is present on residues Ser-304 and Ser-351. Glycyl lysine isopeptide (Lys-Gly) (interchain with G-Cter in SUMO2) cross-links involve residues Lys-353, Lys-411, Lys-415, Lys-422, Lys-426, Lys-441, Lys-444, and Lys-465. Residues 409 to 529 (TGKALAKTEK…KKKKKRENED (121 aa)) form a disordered region. The span at 414 to 427 (AKTEKYEHKSEVKT) shows a compositional bias: basic and acidic residues. Residue Lys-467 forms a Glycyl lysine isopeptide (Lys-Gly) (interchain with G-Cter in SUMO); alternate linkage. Lys-467 participates in a covalent cross-link: Glycyl lysine isopeptide (Lys-Gly) (interchain with G-Cter in SUMO1); alternate. A Glycyl lysine isopeptide (Lys-Gly) (interchain with G-Cter in SUMO2); alternate cross-link involves residue Lys-467. A compositionally biased stretch (acidic residues) spans 469-481 (EEEEEEKVAEEEE). Position 483 is a phosphoserine (Ser-483). A Glycyl lysine isopeptide (Lys-Gly) (interchain with G-Cter in SUMO2) cross-link involves residue Lys-485. The segment covering 485–495 (KKKKKRGKKKH) has biased composition (basic residues). Lys-497 participates in a covalent cross-link: Glycyl lysine isopeptide (Lys-Gly) (interchain with G-Cter in SUMO); alternate. Lys-497 participates in a covalent cross-link: Glycyl lysine isopeptide (Lys-Gly) (interchain with G-Cter in SUMO2); alternate. Phosphoserine is present on residues Ser-502 and Ser-514. The segment covering 517 to 529 (KKKKKKKKRENED) has biased composition (basic residues).

This sequence belongs to the NOP5/NOP56 family. As to quaternary structure, core component of box C/D small nucleolar ribonucleoprotein (snoRNP) particles; the core proteins SNU13, NOP56, NOP58 and FBL or FBLL1 assemble stepwise onto the snoRNA. Interacts with NOLC1/Nopp140. Interacts with NOPCHAP1, NUFIP1, RUVBL1 and RUVBL2; NOPCHAP1 bridges the association of NOP58 with RUVBL1:RUVBL2 and NUFIP1. Interacts with PIH1D1. Part of the small subunit (SSU) processome, composed of more than 70 proteins and the RNA chaperone small nucleolar RNA (snoRNA) U3. Post-translationally, sumoylation is essential for high-affinity binding to snoRNAs. Ubiquitous.

It localises to the nucleus. The protein resides in the nucleolus. The protein localises to the nucleoplasm. Its function is as follows. Required for the biogenesis of box C/D snoRNAs such as U3, U8 and U14 snoRNAs. Part of the small subunit (SSU) processome, first precursor of the small eukaryotic ribosomal subunit. During the assembly of the SSU processome in the nucleolus, many ribosome biogenesis factors, an RNA chaperone and ribosomal proteins associate with the nascent pre-rRNA and work in concert to generate RNA folding, modifications, rearrangements and cleavage as well as targeted degradation of pre-ribosomal RNA by the RNA exosome. Core component of box C/D small nucleolar ribonucleoprotein (snoRNP) complexes that function in methylation of multiple sites on ribosomal RNAs (rRNAs) and messenger RNAs (mRNAs). The polypeptide is Nucleolar protein 58 (Homo sapiens (Human)).